Here is a 128-residue protein sequence, read N- to C-terminus: Histone H2A type 1-H (128 aa).

The segment at 1-22 (MSGRGKQGGKARAKAKTRSSRA) is disordered. An N-acetylserine modification is found at serine 2. At serine 2 the chain carries Phosphoserine; by RPS6KA5. Position 4 is a citrulline; alternate (arginine 4). Arginine 4 is modified (symmetric dimethylarginine; by PRMT5; alternate). 2 positions are modified to N6-(2-hydroxyisobutyryl)lysine; alternate: lysine 6 and lysine 10. At lysine 6 the chain carries N6-(beta-hydroxybutyryl)lysine; alternate. The span at 7–19 (QGGKARAKAKTRS) shows a compositional bias: basic residues. Lysine 10 carries the N6-lactoyllysine; alternate modification. An N6-succinyllysine; alternate modification is found at lysine 10. Glycyl lysine isopeptide (Lys-Gly) (interchain with G-Cter in ubiquitin) cross-links involve residues lysine 14 and lysine 16. The residue at position 37 (lysine 37) is an N6-(2-hydroxyisobutyryl)lysine; alternate. Lysine 37 is subject to N6-(beta-hydroxybutyryl)lysine; alternate. Lysine 37 carries the post-translational modification N6-crotonyllysine; alternate. 2 positions are modified to N6-(2-hydroxyisobutyryl)lysine: lysine 75 and lysine 76. N6-(2-hydroxyisobutyryl)lysine; alternate is present on lysine 96. Lysine 96 is subject to N6-succinyllysine; alternate. Lysine 96 is modified (N6-glutaryllysine; alternate). N5-methylglutamine is present on glutamine 105. Lysine 119 is subject to N6-(2-hydroxyisobutyryl)lysine; alternate. Residues lysine 119 and lysine 120 each carry the N6-crotonyllysine; alternate modification. N6-glutaryllysine; alternate is present on residues lysine 119 and lysine 120. Lysine 120 is subject to N6-(beta-hydroxybutyryl)lysine; alternate. Lysine 120 participates in a covalent cross-link: Glycyl lysine isopeptide (Lys-Gly) (interchain with G-Cter in ubiquitin); alternate. Threonine 121 bears the Phosphothreonine; by DCAF1 mark. The residue at position 126 (lysine 126) is an N6-(beta-hydroxybutyryl)lysine; alternate. Lysine 126 bears the N6-crotonyllysine; alternate mark. Lysine 126 carries the N6-glutaryllysine; alternate modification.

It belongs to the histone H2A family. As to quaternary structure, the nucleosome is a histone octamer containing two molecules each of H2A, H2B, H3 and H4 assembled in one H3-H4 heterotetramer and two H2A-H2B heterodimers. The octamer wraps approximately 147 bp of DNA. Post-translationally, deiminated on Arg-4 in granulocytes upon calcium entry. Monoubiquitination of Lys-120 (H2AK119Ub) by RING1, TRIM37 and RNF2/RING2 complex gives a specific tag for epigenetic transcriptional repression and participates in X chromosome inactivation of female mammals. It is involved in the initiation of both imprinted and random X inactivation. Ubiquitinated H2A is enriched in inactive X chromosome chromatin. Ubiquitination of H2A functions downstream of methylation of 'Lys-27' of histone H3 (H3K27me). H2AK119Ub by RNF2/RING2 can also be induced by ultraviolet and may be involved in DNA repair. Following DNA double-strand breaks (DSBs), it is ubiquitinated through 'Lys-63' linkage of ubiquitin moieties by the E2 ligase UBE2N and the E3 ligases RNF8 and RNF168, leading to the recruitment of repair proteins to sites of DNA damage. Ubiquitination at Lys-14 and Lys-16 (H2AK13Ub and H2AK15Ub, respectively) in response to DNA damage is initiated by RNF168 that mediates monoubiquitination at these 2 sites, and 'Lys-63'-linked ubiquitin are then conjugated to monoubiquitin; RNF8 is able to extend 'Lys-63'-linked ubiquitin chains in vitro. H2AK119Ub and ionizing radiation-induced 'Lys-63'-linked ubiquitination (H2AK13Ub and H2AK15Ub) are distinct events. In terms of processing, phosphorylation on Ser-2 (H2AS1ph) is enhanced during mitosis. Phosphorylation on Ser-2 by RPS6KA5/MSK1 directly represses transcription. Acetylation of H3 inhibits Ser-2 phosphorylation by RPS6KA5/MSK1. Phosphorylation at Thr-121 (H2AT120ph) by DCAF1 is present in the regulatory region of many tumor suppresor genes and down-regulates their transcription. Post-translationally, symmetric dimethylation on Arg-4 by the PRDM1/PRMT5 complex may play a crucial role in the germ-cell lineage. Glutamine methylation at Gln-105 (H2AQ104me) by FBL is specifically dedicated to polymerase I. It is present at 35S ribosomal DNA locus and impairs binding of the FACT complex. In terms of processing, crotonylation (Kcr) is specifically present in male germ cells and marks testis-specific genes in post-meiotic cells, including X-linked genes that escape sex chromosome inactivation in haploid cells. Crotonylation marks active promoters and enhancers and confers resistance to transcriptional repressors. It is also associated with post-meiotically activated genes on autosomes. Post-translationally, hydroxybutyrylation of histones is induced by starvation. Lactylated in macrophages by EP300/P300 by using lactoyl-CoA directly derived from endogenous or exogenous lactate, leading to stimulates gene transcription.

The protein resides in the nucleus. The protein localises to the chromosome. Its function is as follows. Core component of nucleosome. Nucleosomes wrap and compact DNA into chromatin, limiting DNA accessibility to the cellular machineries which require DNA as a template. Histones thereby play a central role in transcription regulation, DNA repair, DNA replication and chromosomal stability. DNA accessibility is regulated via a complex set of post-translational modifications of histones, also called histone code, and nucleosome remodeling. The polypeptide is Histone H2A type 1-H (Mus musculus (Mouse)).